The following is a 328-amino-acid chain: Cytochrome c biogenesis protein CcsA (328 aa).

A run of 8 helical transmembrane segments spans residues 13 to 33, 46 to 66, 73 to 93, 101 to 121, 146 to 166, 234 to 254, 263 to 283, and 295 to 315; these read ISFSVVSIVLTIYFLTFLVNL, GIVITFFGITGLLFTRWIYSG, LYESLIFLSWAFSIIHMISYF, LNAITAPSAIFIQGFATSGLL, MILGYGALLCGSLLSIALLVI, IISLGFIFLTVGILSGAVWAN, WDPKETWAFITWTIFAIFLHI, and AIVASTGFLLIWICYFGVNLL.

Belongs to the CcmF/CycK/Ccl1/NrfE/CcsA family. In terms of assembly, may interact with Ccs1.

The protein resides in the plastid. The protein localises to the chloroplast thylakoid membrane. Its function is as follows. Required during biogenesis of c-type cytochromes (cytochrome c6 and cytochrome f) at the step of heme attachment. In Arabis hirsuta (Hairy rock-cress), this protein is Cytochrome c biogenesis protein CcsA.